The sequence spans 102 residues: Small ribosomal subunit protein eS24 (102 aa).

This sequence belongs to the eukaryotic ribosomal protein eS24 family.

The polypeptide is Small ribosomal subunit protein eS24 (Methanococcoides burtonii (strain DSM 6242 / NBRC 107633 / OCM 468 / ACE-M)).